The sequence spans 864 residues: Coiled-coil and C2 domain-containing protein 1B (864 aa).

The segment at 82 to 154 is disordered; sequence QDCMTDMTGE…VNSSVAEIQH (73 aa). Composition is skewed to acidic residues over residues 89 to 104 and 111 to 129; these read TGEDDDDDLEEDEELL and VGEEEEVEQSQPSDTEESE. A coiled-coil region spans residues 91–118; that stretch reads EDDDDDLEEDEELLAELQDVVGEEEEVE. Residues 142-154 show a composition bias toward polar residues; it reads EQQVNSSVAEIQH. A coiled-coil region spans residues 162–209; sequence GMLQVLEERIGNYKEAISNAKLSNESAKARRYERGLKTLESMLSAARQ. The disordered stretch occupies residues 218-249; that stretch reads IPPPVACGKPAVSPTTDVPTTDTSKQGLGDLN. Low complexity predominate over residues 229 to 241; sequence VSPTTDVPTTDTS. Residues 385-412 adopt a coiled-coil conformation; it reads VGSLLQALQQRMEKYKSAAQQAKSSGDD. 2 disordered regions span residues 441 to 463 and 478 to 502; these read AELPVPPGFPPLPGMEQTEEEGS and AGEDVDDDEDECQAKPPGHPKPTQL. The segment covering 444–453 has biased composition (pro residues); that stretch reads PVPPGFPPLP. Coiled-coil stretches lie at residues 464–488 and 535–564; these read VEKALEAAQKLAKTAGEDVDDDEDE and PAVQEQLEFLEHRKKQYRKAALQAKQKNDL. A C2 domain is found at 685-820; the sequence is HFEDKTLKIV…ETQCEIREIV (136 aa).

Belongs to the CC2D1 family.

In Xenopus laevis (African clawed frog), this protein is Coiled-coil and C2 domain-containing protein 1B (cc2d1b).